A 194-amino-acid polypeptide reads, in one-letter code: ATP synthase subunit delta (194 aa).

The protein belongs to the ATPase delta chain family. F-type ATPases have 2 components, F(1) - the catalytic core - and F(0) - the membrane proton channel. F(1) has five subunits: alpha(3), beta(3), gamma(1), delta(1), epsilon(1). F(0) has three main subunits: a(1), b(2) and c(10-14). The alpha and beta chains form an alternating ring which encloses part of the gamma chain. F(1) is attached to F(0) by a central stalk formed by the gamma and epsilon chains, while a peripheral stalk is formed by the delta and b chains.

The protein resides in the cell inner membrane. Functionally, f(1)F(0) ATP synthase produces ATP from ADP in the presence of a proton or sodium gradient. F-type ATPases consist of two structural domains, F(1) containing the extramembraneous catalytic core and F(0) containing the membrane proton channel, linked together by a central stalk and a peripheral stalk. During catalysis, ATP synthesis in the catalytic domain of F(1) is coupled via a rotary mechanism of the central stalk subunits to proton translocation. Its function is as follows. This protein is part of the stalk that links CF(0) to CF(1). It either transmits conformational changes from CF(0) to CF(1) or is implicated in proton conduction. This is ATP synthase subunit delta from Bartonella bacilliformis (strain ATCC 35685 / KC583 / Herrer 020/F12,63).